The chain runs to 122 residues: Small ribosomal subunit protein uS13 (122 aa).

The interval 95 to 122 (GLPVRGQRTKTNARTRKGPKKTIAGKKK) is disordered.

Belongs to the universal ribosomal protein uS13 family. In terms of assembly, part of the 30S ribosomal subunit. Forms a loose heterodimer with protein S19. Forms two bridges to the 50S subunit in the 70S ribosome.

Its function is as follows. Located at the top of the head of the 30S subunit, it contacts several helices of the 16S rRNA. In the 70S ribosome it contacts the 23S rRNA (bridge B1a) and protein L5 of the 50S subunit (bridge B1b), connecting the 2 subunits; these bridges are implicated in subunit movement. Contacts the tRNAs in the A and P-sites. This chain is Small ribosomal subunit protein uS13, found in Corynebacterium diphtheriae (strain ATCC 700971 / NCTC 13129 / Biotype gravis).